A 154-amino-acid polypeptide reads, in one-letter code: Ribonuclease HI (154 aa).

In terms of domain architecture, RNase H type-1 spans 1-142 (MQKQIEIFTD…CDQLAKAGAE (142 aa)). Residues D10, E48, D70, and D134 each coordinate Mg(2+).

It belongs to the RNase H family. As to quaternary structure, monomer. Mg(2+) serves as cofactor.

Its subcellular location is the cytoplasm. The enzyme catalyses Endonucleolytic cleavage to 5'-phosphomonoester.. In terms of biological role, endonuclease that specifically degrades the RNA of RNA-DNA hybrids. The sequence is that of Ribonuclease HI (rnhA) from Pasteurella multocida (strain Pm70).